A 637-amino-acid polypeptide reads, in one-letter code: Zinc finger protein rsv2 (637 aa).

6 disordered regions span residues 1–41 (MDTT…SKMN), 145–164 (SNHQFITTPPVNGSNEPTSA), 169–207 (IITANSSPSGNAGSNASASMSVPPPLTPSASTINDQPFS), 221–363 (TGAI…STAL), 404–427 (QDSFNKESIKQRIPSLSPPITRSY), and 440–558 (SVNP…GAQR). The span at 172-189 (ANSSPSGNAGSNASASMS) shows a compositional bias: low complexity. Residues 196 to 207 (PSASTINDQPFS) are compositionally biased toward polar residues. The segment covering 279–296 (SDLKRSLGHNQKSDRVSK) has biased composition (basic and acidic residues). The span at 298 to 344 (VSPQHQANPSTLNNPLKTQNFDSSKNLYTDNKDSSLVSPTGLQSRME) shows a compositional bias: polar residues. Basic and acidic residues-rich tracts occupy residues 345 to 355 (QNPEVRAHPMK) and 404 to 413 (QDSFNKESIK). Over residues 455-471 (VPSNTTISSSPPLTSPV) the composition is skewed to low complexity. Composition is skewed to polar residues over residues 472–498 (KTSANIPNLLPTSELDSSNAPHSQSAA) and 508–527 (YYNTRSSHSVVPNPTNQKVS). The segment covering 544–554 (TTPTNSSTTAT) has biased composition (low complexity). The C2H2-type 1 zinc finger occupies 572 to 603 (VRCTLQNRVTGEICNTVFSRTYDLIRHQDTIH). The C2H2-type 2; degenerate zinc finger occupies 610–635 (FRCEICGDQRHFSRHDALVRHLRVKH).

It is found in the nucleus. The chain is Zinc finger protein rsv2 (rsv2) from Schizosaccharomyces pombe (strain 972 / ATCC 24843) (Fission yeast).